Here is a 270-residue protein sequence, read N- to C-terminus: 27 kDa core protein (270 aa).

Belongs to the chordopoxvirinae D3 family.

The protein localises to the virion. Late protein which is part of a large complex required for early virion morphogenesis. This complex participates in the formation of virosomes and the incorporation of virosomal contents into nascent immature virions. This is 27 kDa core protein from Vertebrata (FPV).